A 115-amino-acid chain; its full sequence is NADH-ubiquinone oxidoreductase chain 3 (115 aa).

3 helical membrane-spanning segments follow: residues 4 to 24 (LLVI…AFWL), 55 to 75 (FFLV…LLPI), and 84 to 104 (INMV…GLAY).

The protein belongs to the complex I subunit 3 family. In terms of assembly, core subunit of respiratory chain NADH dehydrogenase (Complex I) which is composed of 45 different subunits. Interacts with TMEM186. Interacts with TMEM242.

The protein resides in the mitochondrion inner membrane. The enzyme catalyses a ubiquinone + NADH + 5 H(+)(in) = a ubiquinol + NAD(+) + 4 H(+)(out). Its function is as follows. Core subunit of the mitochondrial membrane respiratory chain NADH dehydrogenase (Complex I) which catalyzes electron transfer from NADH through the respiratory chain, using ubiquinone as an electron acceptor. Essential for the catalytic activity of complex I. The protein is NADH-ubiquinone oxidoreductase chain 3 of Ochrotomys nuttalli (Golden mouse).